The following is a 422-amino-acid chain: Histidine--tRNA ligase (422 aa).

This sequence belongs to the class-II aminoacyl-tRNA synthetase family. Homodimer.

It is found in the cytoplasm. It carries out the reaction tRNA(His) + L-histidine + ATP = L-histidyl-tRNA(His) + AMP + diphosphate + H(+). The sequence is that of Histidine--tRNA ligase from Vesicomyosocius okutanii subsp. Calyptogena okutanii (strain HA).